The sequence spans 625 residues: Chaperone protein HtpG (625 aa).

The tract at residues 1–332 (MSNKQNTAVQ…TEDLSLNVSR (332 aa)) is a; substrate-binding. The b stretch occupies residues 333–545 (EIVQSSPVMS…KDAMDSQMER (213 aa)). Residues 546–625 (MMKMMQQEMP…ELIEAATLSR (80 aa)) are c.

Belongs to the heat shock protein 90 family. As to quaternary structure, homodimer.

It is found in the cytoplasm. Molecular chaperone. Has ATPase activity. The sequence is that of Chaperone protein HtpG from Chlorobium luteolum (strain DSM 273 / BCRC 81028 / 2530) (Pelodictyon luteolum).